The sequence spans 417 residues: Tyrosine--tRNA ligase (417 aa).

Tyr-39 contacts L-tyrosine. The 'HIGH' region signature appears at 44 to 53 (CTARSLHIGN). L-tyrosine is bound by residues Tyr-176 and Gln-180. Residues 236-240 (KMGKT) carry the 'KMSKS' region motif. Lys-239 contacts ATP. In terms of domain architecture, S4 RNA-binding spans 350–417 (FGVLNAFVKA…KKKHILIKPA (68 aa)).

This sequence belongs to the class-I aminoacyl-tRNA synthetase family. TyrS type 1 subfamily. In terms of assembly, homodimer.

Its subcellular location is the cytoplasm. The enzyme catalyses tRNA(Tyr) + L-tyrosine + ATP = L-tyrosyl-tRNA(Tyr) + AMP + diphosphate + H(+). Functionally, catalyzes the attachment of tyrosine to tRNA(Tyr) in a two-step reaction: tyrosine is first activated by ATP to form Tyr-AMP and then transferred to the acceptor end of tRNA(Tyr). This is Tyrosine--tRNA ligase from Bradyrhizobium diazoefficiens (strain JCM 10833 / BCRC 13528 / IAM 13628 / NBRC 14792 / USDA 110).